Reading from the N-terminus, the 141-residue chain is Nucleoside diphosphate kinase (141 aa).

6 residues coordinate ATP: K11, F59, R87, T93, R104, and N114. H117 serves as the catalytic Pros-phosphohistidine intermediate.

This sequence belongs to the NDK family. Homotetramer. It depends on Mg(2+) as a cofactor.

The protein localises to the cytoplasm. It catalyses the reaction a 2'-deoxyribonucleoside 5'-diphosphate + ATP = a 2'-deoxyribonucleoside 5'-triphosphate + ADP. The catalysed reaction is a ribonucleoside 5'-diphosphate + ATP = a ribonucleoside 5'-triphosphate + ADP. Its function is as follows. Major role in the synthesis of nucleoside triphosphates other than ATP. The ATP gamma phosphate is transferred to the NDP beta phosphate via a ping-pong mechanism, using a phosphorylated active-site intermediate. This Burkholderia multivorans (strain ATCC 17616 / 249) protein is Nucleoside diphosphate kinase.